A 450-amino-acid chain; its full sequence is tRNA-2-methylthio-N(6)-dimethylallyladenosine synthase (450 aa).

The MTTase N-terminal domain occupies 3–119 (RRYYITTFGC…LGELLEQVWN (117 aa)). The [4Fe-4S] cluster site is built by C12, C48, C82, C154, C158, and C161. The 238-residue stretch at 140-377 (RDSTVTAWVN…NHLVAKIAGD (238 aa)) folds into the Radical SAM core domain. In terms of domain architecture, TRAM spans 380-444 (QRYLGREEVV…AFSLSGVPLA (65 aa)).

It belongs to the methylthiotransferase family. MiaB subfamily. Monomer. Requires [4Fe-4S] cluster as cofactor.

Its subcellular location is the cytoplasm. It catalyses the reaction N(6)-dimethylallyladenosine(37) in tRNA + (sulfur carrier)-SH + AH2 + 2 S-adenosyl-L-methionine = 2-methylsulfanyl-N(6)-dimethylallyladenosine(37) in tRNA + (sulfur carrier)-H + 5'-deoxyadenosine + L-methionine + A + S-adenosyl-L-homocysteine + 2 H(+). In terms of biological role, catalyzes the methylthiolation of N6-(dimethylallyl)adenosine (i(6)A), leading to the formation of 2-methylthio-N6-(dimethylallyl)adenosine (ms(2)i(6)A) at position 37 in tRNAs that read codons beginning with uridine. This Thermosynechococcus vestitus (strain NIES-2133 / IAM M-273 / BP-1) protein is tRNA-2-methylthio-N(6)-dimethylallyladenosine synthase.